The chain runs to 449 residues: MFEGIGGETLWRKEKQRPVKELIDFHMDWLHKKNEHDEWLSDRDGELYIRVFFPFFWKNFIHDKIFLSAGSLAFQSLLSLVPLLSVTLSILRVFPVFESLNRYLEDYVLQNFIPGTGTMLREYLNAFIDKTSSVPLLGVVFLFIIALSLISTIDHTLNEIWEVYAPRKIVQGFTLYWTVLTLGPVLIGSSLVASSFVWYTVFTEGPLLELKTRLLSFLPFLNSVIAFFLLYMLVPNRRVRFYHAVYGSLLAAVLFELSKKWFVFYVSHFATFEYIYGALSVIPMLFFWIYLEWVVVLTGAEFVFCLGSLKPKKSISEPFDPMRGIDEILVVLGWIWEGQKTGTPLSMKSIMKKKRALQPSRARSIVDLLLQAGIVHGTANAGFAVSSDLYETTLFDLYTKIPGGFGANESETRGNGGAILPESIGHNVTAGIKSAMTIPLATVLQDKIY.

6 consecutive transmembrane segments (helical) span residues leucine 77–phenylalanine 97, serine 133–isoleucine 153, phenylalanine 173–alanine 193, leucine 214–valine 234, alanine 244–phenylalanine 264, and glycine 277–leucine 297.

It belongs to the UPF0761 family.

It is found in the cell inner membrane. In Chlorobium phaeobacteroides (strain DSM 266 / SMG 266 / 2430), this protein is UPF0761 membrane protein Cpha266_1653.